Here is a 340-residue protein sequence, read N- to C-terminus: UDP-3-O-acylglucosamine N-acyltransferase (340 aa).

The Proton acceptor role is filled by H247.

Belongs to the transferase hexapeptide repeat family. LpxD subfamily. Homotrimer.

The enzyme catalyses a UDP-3-O-[(3R)-3-hydroxyacyl]-alpha-D-glucosamine + a (3R)-hydroxyacyl-[ACP] = a UDP-2-N,3-O-bis[(3R)-3-hydroxyacyl]-alpha-D-glucosamine + holo-[ACP] + H(+). The protein operates within bacterial outer membrane biogenesis; LPS lipid A biosynthesis. In terms of biological role, catalyzes the N-acylation of UDP-3-O-acylglucosamine using 3-hydroxyacyl-ACP as the acyl donor. Is involved in the biosynthesis of lipid A, a phosphorylated glycolipid that anchors the lipopolysaccharide to the outer membrane of the cell. The polypeptide is UDP-3-O-acylglucosamine N-acyltransferase (Caulobacter sp. (strain K31)).